The primary structure comprises 223 residues: Translation initiation factor 6 (223 aa).

This sequence belongs to the eIF-6 family.

Its function is as follows. Binds to the 50S ribosomal subunit and prevents its association with the 30S ribosomal subunit to form the 70S initiation complex. The chain is Translation initiation factor 6 from Saccharolobus islandicus (strain M.16.27) (Sulfolobus islandicus).